A 166-amino-acid chain; its full sequence is Bacterial non-heme ferritin (166 aa).

The 144-residue stretch at 2–145 (LSKNLLEALN…THINYLTRIG (144 aa)) folds into the Ferritin-like diiron domain. Residues Glu-17, Glu-50, His-53, Glu-94, and Gln-127 each contribute to the Fe cation site.

This sequence belongs to the ferritin family. Prokaryotic subfamily.

It localises to the cytoplasm. The enzyme catalyses 4 Fe(2+) + O2 + 6 H2O = 4 iron(III) oxide-hydroxide + 12 H(+). Iron-storage protein. The polypeptide is Bacterial non-heme ferritin (ftnA) (Staphylococcus aureus (strain USA300)).